A 500-amino-acid polypeptide reads, in one-letter code: Cytochrome P450 2D27 (500 aa).

C446 serves as a coordination point for heme.

It belongs to the cytochrome P450 family. It depends on heme as a cofactor. In terms of tissue distribution, expressed in liver, but not in kidney, small intestine, and brain.

Its subcellular location is the endoplasmic reticulum membrane. The protein resides in the microsome membrane. Has bufuralol 1'-hydroxylase and debrisoquine 4-hydroxylase activities. The sequence is that of Cytochrome P450 2D27 (CYP2D27) from Mesocricetus auratus (Golden hamster).